The following is a 203-amino-acid chain: Probable GTP-binding protein EngB (203 aa).

The EngB-type G domain occupies Met-1–Lys-190. Residues Gly-8–Ser-15, Gly-35–Lys-39, Asp-53–Gly-56, Asn-132–Asp-135, and Ile-169–Ala-171 contribute to the GTP site. Ser-15 and Thr-37 together coordinate Mg(2+).

This sequence belongs to the TRAFAC class TrmE-Era-EngA-EngB-Septin-like GTPase superfamily. EngB GTPase family. Mg(2+) is required as a cofactor.

In terms of biological role, necessary for normal cell division and for the maintenance of normal septation. This Methanopyrus kandleri (strain AV19 / DSM 6324 / JCM 9639 / NBRC 100938) protein is Probable GTP-binding protein EngB.